The chain runs to 479 residues: Acetylcholine receptor subunit alpha-type acr-15 (479 aa).

Positions 1 to 18 (MLLPILLHFLLLITQLNG) are cleaved as a signal peptide. Topologically, residues 19–230 (SPAEVRLIND…HLRRRTLYYS (212 aa)) are extracellular. 2 N-linked (GlcNAc...) asparagine glycosylation sites follow: Asn-60 and Asn-92. Residues Cys-146 and Cys-160 are joined by a disulfide bond. The N-linked (GlcNAc...) asparagine glycan is linked to Asn-200. A disulfide bridge connects residues Cys-208 and Cys-209. Residues 231-251 (FNLIAPVLLTMILVILGFTVS) traverse the membrane as a helical segment. Residues 252–257 (PETCEK) are Cytoplasmic-facing. Residues 258 to 278 (VGLQISVSLAICIFLTIMSEL) form a helical membrane-spanning segment. Residues 279–285 (TPQTSEA) lie on the Extracellular side of the membrane. The helical transmembrane segment at 286–306 (VPLLGVFFHTCNFISVLATSF) threads the bilayer. Residues 307-453 (TVYVQSFHFR…WRFAAIVVDR (147 aa)) are Cytoplasmic-facing. Residues 454–474 (LCLLAFSLLIVVVSIIIALRA) form a helical membrane-spanning segment. Residues 475–479 (PYLFA) lie on the Extracellular side of the membrane.

The protein belongs to the ligand-gated ion channel (TC 1.A.9) family. Acetylcholine receptor (TC 1.A.9.1) subfamily. Expressed in interneurons, motor neurons, pharyngeal neurons and muscles.

The protein localises to the cell membrane. Its subcellular location is the postsynaptic cell membrane. After binding acetylcholine, the AChR responds by an extensive change in conformation that affects all subunits and leads to opening of an ion-conducting channel across the plasma membrane. Activity is required in glutamatergic neurons to mediate nicotine-induced and nicotine-motivated behaviors. This Caenorhabditis elegans protein is Acetylcholine receptor subunit alpha-type acr-15.